Reading from the N-terminus, the 352-residue chain is Chymopapain (352 aa).

A signal peptide spans 1 to 18 (MATMSSISKIIFLATCLI). Residues 19–134 (IHMGLSSADF…EDFTYKHVTN (116 aa)) constitute a propeptide, activation peptide. Asn86 carries N-linked (GlcNAc...) asparagine glycosylation. 3 disulfide bridges follow: Cys156-Cys197, Cys190-Cys229, and Cys287-Cys338. The active site involves Cys159. Active-site residues include His293 and Asn313.

The protein belongs to the peptidase C1 family.

It carries out the reaction Specificity similar to that of papain.. In terms of biological role, cysteine proteinase with a high level of diversity in substrate specificity. The chain is Chymopapain from Carica papaya (Papaya).